The chain runs to 827 residues: Disintegrin and metalloproteinase domain-containing protein 17 (827 aa).

The first 17 residues, 1–17 (MRQRLLFLTTLVPFVLA), serve as a signal peptide directing secretion. The propeptide occupies 18–214 (PRPPEEPGSG…SEEFVRRVKR (197 aa)). Asn157 is a glycosylation site (N-linked (GlcNAc...) asparagine). The short motif at 182–189 (KVCGYLNA) is the Cysteine switch element. Residue Cys184 participates in Zn(2+) binding. The Extracellular portion of the chain corresponds to 215-671 (RAEPNPLKNT…NTFGKFLADN (457 aa)). Residues 223-474 (NTCKLLVVAD…KAQECFQERS (252 aa)) form the Peptidase M12B domain. Intrachain disulfides connect Cys225-Cys333, Cys365-Cys469, and Cys423-Cys453. Residue Asn264 is glycosylated (N-linked (GlcNAc...) asparagine). His405 is a binding site for Zn(2+). The active site involves Glu406. The Zn(2+) site is built by His409 and His415. N-linked (GlcNAc...) asparagine glycosylation is found at Asn452, Asn498, Asn539, and Asn551. One can recognise a Disintegrin domain in the interval 475–563 (NKVCGNSRVD…ECPPPGDAED (89 aa)). 4 disulfides stabilise this stretch: Cys534-Cys555, Cys573-Cys582, Cys578-Cys591, and Cys593-Cys600. Residues 603 to 671 (CCRNLSGPCV…NTFGKFLADN (69 aa)) form a crambin-like region. Asn606 carries N-linked (GlcNAc...) asparagine glycosylation. Residues 672–692 (IVGSVLVFSLIFWIPFSILVH) traverse the membrane as a helical segment. Over 693-827 (CVDKKLDKQY…SRVDSKETEC (135 aa)) the chain is Cytoplasmic. An SH3-binding motif is present at residues 731 to 738 (PAPQTPGR). Residue Thr735 is modified to Phosphothreonine; by MAPK14. The residue at position 764 (Thr764) is a Phosphothreonine. Residues 766–827 (QEDPSTDSHV…SRVDSKETEC (62 aa)) are disordered. Ser770 is subject to Phosphoserine. Composition is skewed to basic and acidic residues over residues 771–784 (TDSH…EKDP), 794–810 (SFED…EKAA), and 818–827 (SRVDSKETEC). 2 positions are modified to phosphoserine: Ser794 and Ser822.

Interacts with MAD2L1, MAPK14 and MUC1. Interacts with iRhom1/RHBDF1 and iRhom2/RHBDF2. Interacts with FRMD8 via its interaction with iRhom1/RHBDF1 and iRhom2/RHBDF2. Interacts with TSPAN8. The cofactor is Zn(2+). In terms of processing, the precursor is cleaved by a furin endopeptidase. Phosphorylated. Stimulation by growth factor or phorbol 12-myristate 13-acetate induces phosphorylation of Ser-822 but decreases phosphorylation of Ser-794. Phosphorylation at Thr-735 by MAPK14 is required for ADAM17-mediated ectodomain shedding.

It is found in the membrane. It catalyses the reaction Narrow endopeptidase specificity. Cleaves Pro-Leu-Ala-Gln-Ala-|-Val-Arg-Ser-Ser-Ser in the membrane-bound, 26-kDa form of tumor necrosis factor alpha (TNFalpha). Similarly cleaves other membrane-anchored, cell-surface proteins to 'shed' the extracellular domains.. Functionally, transmembrane metalloprotease which mediates the ectodomain shedding of a myriad of transmembrane proteins including adhesion proteins, growth factor precursors and cytokines important for inflammation and immunity. Cleaves the membrane-bound precursor of TNF-alpha to its mature soluble form. Responsible for the proteolytical release of soluble JAM3 from endothelial cells surface. Responsible for the proteolytic release of several other cell-surface proteins, including p75 TNF-receptor, interleukin 1 receptor type II, p55 TNF-receptor, transforming growth factor-alpha, L-selectin, growth hormone receptor, MUC1 and the amyloid precursor protein. Acts as an activator of Notch pathway by mediating cleavage of Notch, generating the membrane-associated intermediate fragment called Notch extracellular truncation (NEXT). Plays a role in the proteolytic processing of ACE2. Plays a role in hemostasis through shedding of GP1BA, the platelet glycoprotein Ib alpha chain. Mediates the proteolytic cleavage of LAG3, leading to release the secreted form of LAG3. Mediates the proteolytic cleavage of IL6R, leading to the release of secreted form of IL6R. Mediates the proteolytic cleavage and shedding of FCGR3A upon NK cell stimulation, a mechanism that allows for increased NK cell motility and detachment from opsonized target cells. Cleaves TREM2, resulting in shedding of the TREM2 ectodomain. This Rattus norvegicus (Rat) protein is Disintegrin and metalloproteinase domain-containing protein 17 (Adam17).